The primary structure comprises 92 residues: Small ribosomal subunit protein uS19c (92 aa).

It belongs to the universal ribosomal protein uS19 family.

The protein resides in the plastid. Its function is as follows. Protein S19 forms a complex with S13 that binds strongly to the 16S ribosomal RNA. This is Small ribosomal subunit protein uS19c from Aneura mirabilis (Parasitic liverwort).